The primary structure comprises 435 residues: Glucan 1,3-beta-glucosidase (435 aa).

Residues 1 to 30 (MLFPVLHLPKAMKFSSFSLIASSLLSLVAA) form the signal peptide. The Proton donor role is filled by E222. 2 disulfides stabilise this stretch: C306/C432 and C331/C357. E323 acts as the Nucleophile in catalysis.

It belongs to the glycosyl hydrolase 5 (cellulase A) family.

It localises to the secreted. The enzyme catalyses Successive hydrolysis of beta-D-glucose units from the non-reducing ends of (1-&gt;3)-beta-D-glucans, releasing alpha-glucose.. Functionally, beta-glucanases participate in the metabolism of beta-glucan, the main structural component of the cell wall. It could also function biosynthetically as a transglycosylase. This Pichia angusta (Yeast) protein is Glucan 1,3-beta-glucosidase.